Reading from the N-terminus, the 234-residue chain is Protein fmp52, mitochondrial (234 aa).

The N-terminal 36 residues, 1–36, are a transit peptide targeting the mitochondrion; it reads MANVALLGCTGMVGSHILTHLLGNSSVARIDTISRR.

Belongs to the FMP52 family.

It is found in the mitochondrion outer membrane. This Aspergillus niger (strain ATCC MYA-4892 / CBS 513.88 / FGSC A1513) protein is Protein fmp52, mitochondrial (fmp52).